The following is a 119-amino-acid chain: Large ribosomal subunit protein bL20 (119 aa).

The protein belongs to the bacterial ribosomal protein bL20 family.

In terms of biological role, binds directly to 23S ribosomal RNA and is necessary for the in vitro assembly process of the 50S ribosomal subunit. It is not involved in the protein synthesizing functions of that subunit. The sequence is that of Large ribosomal subunit protein bL20 from Nitrosospira multiformis (strain ATCC 25196 / NCIMB 11849 / C 71).